The following is a 221-amino-acid chain: Orotate phosphoribosyltransferase (221 aa).

Residue Lys-27 participates in 5-phospho-alpha-D-ribose 1-diphosphate binding. Residue 35 to 36 participates in orotate binding; that stretch reads FF. Residues 75–76, Arg-102, Lys-103, Lys-106, His-108, and 128–136 contribute to the 5-phospho-alpha-D-ribose 1-diphosphate site; these read YK and DDVLTAGTA. Orotate-binding residues include Thr-132 and Arg-160.

It belongs to the purine/pyrimidine phosphoribosyltransferase family. PyrE subfamily. As to quaternary structure, homodimer. Mg(2+) is required as a cofactor.

It catalyses the reaction orotidine 5'-phosphate + diphosphate = orotate + 5-phospho-alpha-D-ribose 1-diphosphate. The protein operates within pyrimidine metabolism; UMP biosynthesis via de novo pathway; UMP from orotate: step 1/2. Catalyzes the transfer of a ribosyl phosphate group from 5-phosphoribose 1-diphosphate to orotate, leading to the formation of orotidine monophosphate (OMP). This Dichelobacter nodosus (strain VCS1703A) protein is Orotate phosphoribosyltransferase.